Consider the following 271-residue polypeptide: 4-diphosphocytidyl-2-C-methyl-D-erythritol kinase (271 aa).

Lys17 is an active-site residue. 97–107 is an ATP binding site; that stretch reads PVGSGLGGGSS. Residue Asp137 is part of the active site.

It belongs to the GHMP kinase family. IspE subfamily.

It carries out the reaction 4-CDP-2-C-methyl-D-erythritol + ATP = 4-CDP-2-C-methyl-D-erythritol 2-phosphate + ADP + H(+). Its pathway is isoprenoid biosynthesis; isopentenyl diphosphate biosynthesis via DXP pathway; isopentenyl diphosphate from 1-deoxy-D-xylulose 5-phosphate: step 3/6. Its function is as follows. Catalyzes the phosphorylation of the position 2 hydroxy group of 4-diphosphocytidyl-2C-methyl-D-erythritol. The polypeptide is 4-diphosphocytidyl-2-C-methyl-D-erythritol kinase (Thermotoga maritima (strain ATCC 43589 / DSM 3109 / JCM 10099 / NBRC 100826 / MSB8)).